A 325-amino-acid chain; its full sequence is 4-hydroxy-3-methylbut-2-enyl diphosphate reductase (325 aa).

[4Fe-4S] cluster is bound at residue Cys21. Positions 50 and 83 each coordinate (2E)-4-hydroxy-3-methylbut-2-enyl diphosphate. Dimethylallyl diphosphate contacts are provided by His50 and His83. 2 residues coordinate isopentenyl diphosphate: His50 and His83. Residue Cys105 coordinates [4Fe-4S] cluster. Residue His133 participates in (2E)-4-hydroxy-3-methylbut-2-enyl diphosphate binding. Residue His133 participates in dimethylallyl diphosphate binding. Residue His133 participates in isopentenyl diphosphate binding. The Proton donor role is filled by Glu135. Thr173 serves as a coordination point for (2E)-4-hydroxy-3-methylbut-2-enyl diphosphate. Position 203 (Cys203) interacts with [4Fe-4S] cluster. Ser231, Ser232, Asn233, and Ser275 together coordinate (2E)-4-hydroxy-3-methylbut-2-enyl diphosphate. Dimethylallyl diphosphate is bound by residues Ser231, Ser232, Asn233, and Ser275. Isopentenyl diphosphate-binding residues include Ser231, Ser232, Asn233, and Ser275.

It belongs to the IspH family. It depends on [4Fe-4S] cluster as a cofactor.

The catalysed reaction is isopentenyl diphosphate + 2 oxidized [2Fe-2S]-[ferredoxin] + H2O = (2E)-4-hydroxy-3-methylbut-2-enyl diphosphate + 2 reduced [2Fe-2S]-[ferredoxin] + 2 H(+). It carries out the reaction dimethylallyl diphosphate + 2 oxidized [2Fe-2S]-[ferredoxin] + H2O = (2E)-4-hydroxy-3-methylbut-2-enyl diphosphate + 2 reduced [2Fe-2S]-[ferredoxin] + 2 H(+). It participates in isoprenoid biosynthesis; dimethylallyl diphosphate biosynthesis; dimethylallyl diphosphate from (2E)-4-hydroxy-3-methylbutenyl diphosphate: step 1/1. The protein operates within isoprenoid biosynthesis; isopentenyl diphosphate biosynthesis via DXP pathway; isopentenyl diphosphate from 1-deoxy-D-xylulose 5-phosphate: step 6/6. Its function is as follows. Catalyzes the conversion of 1-hydroxy-2-methyl-2-(E)-butenyl 4-diphosphate (HMBPP) into a mixture of isopentenyl diphosphate (IPP) and dimethylallyl diphosphate (DMAPP). Acts in the terminal step of the DOXP/MEP pathway for isoprenoid precursor biosynthesis. In Bordetella pertussis (strain Tohama I / ATCC BAA-589 / NCTC 13251), this protein is 4-hydroxy-3-methylbut-2-enyl diphosphate reductase.